The sequence spans 998 residues: Collagen alpha-1(I) chain (998 aa).

The disordered stretch occupies residues 1–998 (GGVSVPGPMG…PGPPGPPGPP (998 aa)). 9 positions are modified to 4-hydroxyproline: P18, P21, P24, P33, P48, P63, P69, P78, and P84. The span at 26-39 (PQGFQGPPGSSGPM) shows a compositional bias: low complexity. Residues 51–65 (NGDDGEAGKPGRPGE) show a composition bias toward basic and acidic residues. K87 is subject to 5-hydroxylysine; alternate. K87 carries an O-linked (Gal...) hydroxylysine; alternate glycan. Position 93 is a phosphoserine (S93). Positions 101–115 (DAGPAGPKQMGPRGL) are enriched in low complexity. 4-hydroxyproline occurs at positions 116, 122, 143, 152, 155, 182, 185, 197, 203, 212, 218, 221, and 236. Positions 122-140 (PGASGPAGARGNDGATGAA) are enriched in low complexity. Residues 142 to 154 (PPGPTGPAGPPGF) show a composition bias toward pro residues. Residues 188–238 (AGAAGPAGNPGADGQPGAKGANGAPGIAGAPGFPGARGPSGPQGPSGAPGP) show a composition bias toward low complexity. Position 239 is a 5-hydroxylysine (K239). 8 positions are modified to 4-hydroxyproline: P245, P248, P260, P269, P284, P290, P299, and P305. The segment covering 294 to 303 (GERGGPGSRG) has biased composition (gly residues). 5-hydroxylysine is present on K314. A 4-hydroxyproline mark is found at P323, P332, P338, P344, P353, P356, P365, P374, P380, P392, P401, P410, P413, P431, P449, P455, P461, P467, P473, P479, P491, P500, P511, P523, P526, P532, P538, and P547. A compositionally biased stretch (low complexity) spans 347–401 (KGLTGSPGSPGPDGKTGPPGPAGQDGRPGPAGPPGARGQAGVMGFPGPKGAAGEP). Low complexity predominate over residues 443-470 (QGPAGSPGFQGLPGPAGPPGEAGKPGEQ). The segment covering 513 to 535 (NDGAKGDAGAPGAPGSQGAPGLQ) has biased composition (low complexity). At K559 the chain carries 5-hydroxylysine. P565 and P580 each carry 4-hydroxyproline. A compositionally biased stretch (low complexity) spans 592 to 606 (TGPSGPAGPTGARGA). S595 bears the Phosphoserine mark. A 4-hydroxyproline mark is found at P607, P613, P616, P625, P631, P649, P658, and P667. Residues 619 to 646 (AGFAGPPGADGQPGAKGEPGDAGAKGDA) show a composition bias toward low complexity. Pro residues predominate over residues 648–660 (PPGPAGPTGPPGP). Residue K670 is modified to 5-hydroxylysine. Residues 675–691 (SAGPPGATGFPGAAGRV) show a composition bias toward low complexity. P679 and P685 each carry 4-hydroxyproline. P693 carries the 3-hydroxyproline modification. 16 positions are modified to 4-hydroxyproline: P694, P703, P706, P727, P736, P744, P753, P771, P780, P783, P789, P804, P810, P816, P825, and P831. The segment covering 720 to 729 (ETGPAGRPGE) has biased composition (low complexity). Low complexity predominate over residues 741–762 (KGSPGADGPAGAPGTPGPQGIA). Residues 803–813 (PPGPMGPPGLA) show a composition bias toward pro residues. Positions 815-830 (PPGEAGREGSPGAEGS) are enriched in low complexity. K840 is modified (5-hydroxylysine). The span at 848 to 863 (PGPPGAPGAPGAPGPV) shows a compositional bias: pro residues. P851, P854, and P857 each carry 4-hydroxyproline. The segment covering 884–898 (AGPAGARGPAGPQGP) has biased composition (low complexity). The span at 899-913 (RGDKGETGEQGDRGI) shows a compositional bias: basic and acidic residues. K902 bears the 5-hydroxylysine mark. K914 is subject to 5-hydroxylysine; alternate. Residue K914 is glycosylated (O-linked (Gal...) hydroxylysine; alternate). 4 positions are modified to 4-hydroxyproline: P929, P932, P950, and P965. Residues 932 to 965 (PGEQGPSGASGPAGPRGPPGSAGTPGKDGLNGLP) show a composition bias toward low complexity. P970 carries the post-translational modification 3-hydroxyproline. Residue P971 is modified to 4-hydroxyproline. A compositionally biased stretch (pro residues) spans 983 to 998 (VGPPGPPGPPGPPGPP). P985 carries the post-translational modification 3-hydroxyproline. 4-hydroxyproline is present on P986. At P988 the chain carries 3-hydroxyproline. The residue at position 989 (P989) is a 4-hydroxyproline. P991 bears the 3-hydroxyproline mark. 3 positions are modified to 4-hydroxyproline: P992, P995, and P998.

The protein belongs to the fibrillar collagen family. As to quaternary structure, trimers of one alpha 2(I) and two alpha 1(I) chains. Contains mostly 4-hydroxyproline. Proline residues at the third position of the tripeptide repeating unit (G-X-Y) are hydroxylated in some or all of the chains. In terms of processing, contains 3-hydroxyproline at a few sites. This modification occurs on the first proline residue in the sequence motif Gly-Pro-Hyp, where Hyp is 4-hydroxyproline. Post-translationally, lysine residues at the third position of the tripeptide repeating unit (G-X-Y) are 5-hydroxylated in some or all of the chains. O-glycosylated on hydroxylated lysine residues. The O-linked glycan consists of a Glc-Gal disaccharide. In terms of tissue distribution, expressed in bones.

Its subcellular location is the secreted. The protein localises to the extracellular space. The protein resides in the extracellular matrix. Type I collagen is a member of group I collagen (fibrillar forming collagen). In Glyptodon sp. (strain SLP-2019) (Giant armadillo), this protein is Collagen alpha-1(I) chain.